We begin with the raw amino-acid sequence, 728 residues long: Lutropin-choriogonadotropic hormone receptor (728 aa).

Residues 1-19 (MLPALLPLLLPALLPGAGG) form the signal peptide. Residues 20-389 (GRCPQRCACT…DILGYSFLRV (370 aa)) lie on the Extracellular side of the membrane. LRR repeat units lie at residues 92-116 (LPALSEILILNTKNLLHIEDGAFRN), 117-142 (LPRLKYLSICNTGIIEFPDLTQIFSS), 144-166 (AHFILELCDNLRMTTIPQNAFQG), 168-191 (SNESLTLKLYKNGFEDIHSHAFNG), 193-215 (KLNQLILKDNKNLRRIHNDALRG), and 216-239 (ATGPDVLDISSTALESLPSYGLEA). A helical transmembrane segment spans residues 390–410 (LIWFINILALAGNFIVLLVLI). Residues 411-420 (TSHYKLTVPR) are Cytoplasmic-facing. The chain crosses the membrane as a helical span at residues 421 to 441 (FLMCNLSFADFCMGLYLLLIA). The Extracellular portion of the chain corresponds to 442 to 466 (SVDAQTSGQYYNHAIDWQTGSGCST). The cysteines at positions 464 and 539 are disulfide-linked. The helical transmembrane segment at 467–487 (AGFFTVFASELSVYTLTVITI) threads the bilayer. The Cytoplasmic segment spans residues 488–507 (ERWHTITYAMQLDRKLRLRH). A helical membrane pass occupies residues 508-528 (AVPIMLGGWVFSILIAVLPLL). The Extracellular segment spans residues 529–551 (GVSSYMKVSICLPMDIETGLSQA). The helical transmembrane segment at 552-572 (YILLILMLNVIAFLVICACYI) threads the bilayer. The Cytoplasmic segment spans residues 573-595 (KIYVAVQNPELVAANKDTKIAKR). A helical transmembrane segment spans residues 596 to 616 (MAILIFTDFTCMAPISFFAIS). The Extracellular portion of the chain corresponds to 617–630 (AAIKVPLITVTNSK). A helical transmembrane segment spans residues 631–651 (ILLVLFYPVNSCANPFLYAIF). Topologically, residues 652 to 728 (TKAFQRDFFL…STKKSQPECQ (77 aa)) are cytoplasmic.

This sequence belongs to the G-protein coupled receptor 1 family. FSH/LSH/TSH subfamily. In terms of tissue distribution, expressed in ovarian follicle granulosa cells. Expressed in ovarian follicle theca cells.

It is found in the cell membrane. In terms of biological role, receptor for lutropin-choriogonadotropic hormone. The activity of this receptor is mediated by G proteins which activate adenylate cyclase. In Gallus gallus (Chicken), this protein is Lutropin-choriogonadotropic hormone receptor.